The primary structure comprises 334 residues: tRNA-dihydrouridine synthase B (334 aa).

FMN-binding positions include 16 to 18 (PMA) and Gln-70. Cys-100 functions as the Proton donor in the catalytic mechanism. FMN contacts are provided by residues Lys-139, 200 to 202 (NGD), and 224 to 225 (GR).

Belongs to the Dus family. DusB subfamily. Requires FMN as cofactor.

It carries out the reaction a 5,6-dihydrouridine in tRNA + NAD(+) = a uridine in tRNA + NADH + H(+). The enzyme catalyses a 5,6-dihydrouridine in tRNA + NADP(+) = a uridine in tRNA + NADPH + H(+). Functionally, catalyzes the synthesis of 5,6-dihydrouridine (D), a modified base found in the D-loop of most tRNAs, via the reduction of the C5-C6 double bond in target uridines. This chain is tRNA-dihydrouridine synthase B, found in Serratia marcescens.